A 262-amino-acid chain; its full sequence is Pyridoxine 5'-phosphate synthase (262 aa).

Asn-6 is a binding site for 3-amino-2-oxopropyl phosphate. A 1-deoxy-D-xylulose 5-phosphate-binding site is contributed by 8 to 9 (DH). Residue Arg-17 coordinates 3-amino-2-oxopropyl phosphate. The active-site Proton acceptor is the His-43. Positions 45 and 50 each coordinate 1-deoxy-D-xylulose 5-phosphate. Catalysis depends on Glu-70, which acts as the Proton acceptor. 1-deoxy-D-xylulose 5-phosphate is bound at residue Thr-102. His-215 functions as the Proton donor in the catalytic mechanism. 3-amino-2-oxopropyl phosphate contacts are provided by residues Gly-216 and 237–238 (GH).

The protein belongs to the PNP synthase family. In terms of assembly, homooctamer; tetramer of dimers.

The protein localises to the cytoplasm. It catalyses the reaction 3-amino-2-oxopropyl phosphate + 1-deoxy-D-xylulose 5-phosphate = pyridoxine 5'-phosphate + phosphate + 2 H2O + H(+). The protein operates within cofactor biosynthesis; pyridoxine 5'-phosphate biosynthesis; pyridoxine 5'-phosphate from D-erythrose 4-phosphate: step 5/5. Functionally, catalyzes the complicated ring closure reaction between the two acyclic compounds 1-deoxy-D-xylulose-5-phosphate (DXP) and 3-amino-2-oxopropyl phosphate (1-amino-acetone-3-phosphate or AAP) to form pyridoxine 5'-phosphate (PNP) and inorganic phosphate. This chain is Pyridoxine 5'-phosphate synthase, found in Helicobacter pylori (strain HPAG1).